The primary structure comprises 210 residues: Probable GTP-binding protein EngB (210 aa).

One can recognise an EngB-type G domain in the interval 25–199 (CGIEVAFAGR…RQKLDSWFSE (175 aa)). GTP is bound by residues 33-40 (GRSNAGKS), 60-64 (GRTQL), 78-81 (DLPG), 145-148 (TKAD), and 178-180 (FSS). Mg(2+)-binding residues include serine 40 and threonine 62.

It belongs to the TRAFAC class TrmE-Era-EngA-EngB-Septin-like GTPase superfamily. EngB GTPase family. Mg(2+) is required as a cofactor.

Functionally, necessary for normal cell division and for the maintenance of normal septation. The polypeptide is Probable GTP-binding protein EngB (Salmonella agona (strain SL483)).